A 311-amino-acid chain; its full sequence is tRNA-cytidine(32) 2-sulfurtransferase (311 aa).

Residues 18–38 (KVGADHGPSEENGSSHPLFDN) are disordered. The PP-loop motif motif lies at 77–82 (SGGKDS). Residues Cys-152, Cys-155, and Cys-243 each coordinate [4Fe-4S] cluster.

The protein belongs to the TtcA family. In terms of assembly, homodimer. Requires Mg(2+) as cofactor. It depends on [4Fe-4S] cluster as a cofactor.

It is found in the cytoplasm. The enzyme catalyses cytidine(32) in tRNA + S-sulfanyl-L-cysteinyl-[cysteine desulfurase] + AH2 + ATP = 2-thiocytidine(32) in tRNA + L-cysteinyl-[cysteine desulfurase] + A + AMP + diphosphate + H(+). It participates in tRNA modification. Its function is as follows. Catalyzes the ATP-dependent 2-thiolation of cytidine in position 32 of tRNA, to form 2-thiocytidine (s(2)C32). The sulfur atoms are provided by the cysteine/cysteine desulfurase (IscS) system. The polypeptide is tRNA-cytidine(32) 2-sulfurtransferase (Agrobacterium fabrum (strain C58 / ATCC 33970) (Agrobacterium tumefaciens (strain C58))).